Here is a 178-residue protein sequence, read N- to C-terminus: Caveolin-1 (178 aa).

Ser-2 carries the N-acetylserine modification. Ser-2 is modified (phosphoserine). The interval 2-94 (SGGKYVDSEG…WKASFTTFTV (93 aa)) is required for homooligomerization. The Cytoplasmic portion of the chain corresponds to 2-104 (SGGKYVDSEG…TKYWFYRLLS (103 aa)). Residue Lys-5 is modified to N6-acetyllysine; alternate. Lys-5 participates in a covalent cross-link: Glycyl lysine isopeptide (Lys-Gly) (interchain with G-Cter in ubiquitin); alternate. Tyr-6 is subject to Phosphotyrosine. Ser-9 is subject to Phosphoserine. Position 14 is a phosphotyrosine; by ABL1 and INSR (Tyr-14). Tyr-25 carries the phosphotyrosine modification. Residues Lys-26, Lys-30, Lys-39, Lys-47, and Lys-57 each participate in a glycyl lysine isopeptide (Lys-Gly) (interchain with G-Cter in ubiquitin) cross-link. The segment at 82–94 (DGIWKASFTTFTV) is interaction with CAVIN3. An intramembrane region (helical) is located at residues 105–125 (TIFGIPMALIWGIYFAILSFL). Residues 126–178 (HIWAVVPCIKSFLIEIQCISRVYSIYVHTFCDPLFEAIGKIFSNIRISTQKEI) are Cytoplasmic-facing. The interval 131-142 (VPCIKSFLIEIQ) is interacts with SPRY1, SPRY2, SPRY3 and SPRY4. Residues Cys-133, Cys-143, and Cys-156 are each lipidated (S-palmitoyl cysteine). The interacts with SPRY1, SPRY2, and SPRY4 stretch occupies residues 149 to 160 (SIYVHTFCDPLF). Positions 167–178 (FSNIRISTQKEI) are interacts with SPRY1, SPRY2, SPRY3 and SPRY4.

Belongs to the caveolin family. As to quaternary structure, homooligomer. Interacts (via the N-terminus) with DPP4; the interaction is direct. Forms a stable heterooligomeric complex with CAV2 that targets to lipid rafts and drives caveolae formation. Interacts with BMX, BTK, CTNNB1, CDH1, GLIPR2, JUP, NOSTRIN, SNAP25 and STX1A. Interacts with SLC7A9. Interacts with TGFBR1. Interacts with CTNNB1, CDH1 and JUP. Interacts with PACSIN2; this interaction induces membrane tubulation. Interacts with CAVIN3 (via leucine-zipper domain) in a cholesterol-sensitive manner. Interacts with EHD2 in a cholesterol-dependent manner. Interacts with CAVIN1. Forms a ternary complex with UBXN6 and VCP; mediates CAV1 targeting to lysosomes for degradation. Interacts with ABCG1; this interaction regulates ABCG1-mediated cholesterol efflux. Interacts with NEU3; this interaction enhances NEU3 sialidase activity within caveola. Interacts (via C-terminus) with SPRY1, SPRY2 (via C-terminus), SPRY3, and SPRY4. Interacts with IGFBP5; this interaction allows trafficking of IGFBP5 from the plasma membrane to the nucleus. The N-terminus of both isoforms are blocked. Post-translationally, phosphorylated at Tyr-14 by ABL1 in response to oxidative stress. In terms of processing, ubiquitinated. Undergo monoubiquitination and multi- and/or polyubiquitination. Monoubiquitination of N-terminal lysines promotes integration in a ternary complex with UBXN6 and VCP which promotes oligomeric CAV1 targeting to lysosomes for degradation. Ubiquitinated by ZNRF1; leading to degradation and modulation of the TLR4-mediated immune response. In terms of tissue distribution, adipose tissue, lung, heart, skeletal muscle, stomach, small bowel, kidney, spleen and testis (at protein level).

The protein localises to the golgi apparatus membrane. The protein resides in the cell membrane. It is found in the membrane. It localises to the caveola. Its subcellular location is the membrane raft. The protein localises to the golgi apparatus. The protein resides in the trans-Golgi network. Its function is as follows. May act as a scaffolding protein within caveolar membranes. Forms a stable heterooligomeric complex with CAV2 that targets to lipid rafts and drives caveolae formation. Mediates the recruitment of CAVIN proteins (CAVIN1/2/3/4) to the caveolae. Interacts directly with G-protein alpha subunits and can functionally regulate their activity. Involved in the costimulatory signal essential for T-cell receptor (TCR)-mediated T-cell activation. Its binding to DPP4 induces T-cell proliferation and NF-kappa-B activation in a T-cell receptor/CD3-dependent manner. Recruits CTNNB1 to caveolar membranes and may regulate CTNNB1-mediated signaling through the Wnt pathway. Negatively regulates TGFB1-mediated activation of SMAD2/3 by mediating the internalization of TGFBR1 from membrane rafts leading to its subsequent degradation. Binds 20(S)-hydroxycholesterol (20(S)-OHC). The polypeptide is Caveolin-1 (Cav1) (Mus musculus (Mouse)).